The chain runs to 169 residues: uncharacterized protein (169 aa).

This is an uncharacterized protein from Methanocaldococcus jannaschii (strain ATCC 43067 / DSM 2661 / JAL-1 / JCM 10045 / NBRC 100440) (Methanococcus jannaschii).